The chain runs to 152 residues: MAQEAGLIPPPPHLSNPRFTLELEFVLSLANPYYISHLAVTYPHLLGISSQSTDNDDPSASSDAKAFAAYLAYLYDYWKRPEYVQFLTHPGATLRALRLLQEESFRKAVIRPQVIEALLGTTTEVDLHVESEEDREKNNEEQAEKGSNGATS.

Over residues D126 to E144 the composition is skewed to basic and acidic residues. The segment at D126 to S152 is disordered.

Belongs to the Mediator complex subunit 31 family. Component of the Mediator complex.

The protein resides in the nucleus. Functionally, component of the Mediator complex, a coactivator involved in the regulated transcription of nearly all RNA polymerase II-dependent genes. Mediator functions as a bridge to convey information from gene-specific regulatory proteins to the basal RNA polymerase II transcription machinery. Mediator is recruited to promoters by direct interactions with regulatory proteins and serves as a scaffold for the assembly of a functional preinitiation complex with RNA polymerase II and the general transcription factors. This chain is Mediator of RNA polymerase II transcription subunit 31 (SOH1), found in Coccidioides immitis (strain RS) (Valley fever fungus).